Reading from the N-terminus, the 457-residue chain is MLKDTIAAIATPAGTGGIGIVRISGSEAASILNLLFKSSHSVTLFKPRYLYHGDLSDPQTGQVIDEVLVSLMKAPRSYTGEDTLEIYCHGGILVLESVLLAVLRSGARLADPGEFTRRAFLNDRIDLTQAEAVGDVIMARTSKGLEAAVSHLKGQLKQKIDSLRDELIDVQVLLESAIDFTEDVEFPSPSEVLSKLERLSSDLEALLSTYDQGKVYRHGATVVIAGKPNTGKSSLLNCLLQEKRAIVTPVPGTTRDFIEEAISIQGVSVRMIDTAGIHPTDDLIECEGIRMVWEKLATADGVILLLDGSKDLTDEDRKILKRLQGYNLLPVINKADLDHSLKEEDIIACFPGTDPLWVSAKFGEGIAVLKEKIYDLVLEKAGEQDGDVLINSLRHKMALEKTRQQVSQALASLQEGLSQEFAALDIREALEALGEIAGETVTEDILDRIFSSFCIGK.

The (6S)-5-formyl-5,6,7,8-tetrahydrofolate site is built by Arg-22, Glu-85, and Arg-124. The TrmE-type G domain maps to 219-378 (GATVVIAGKP…LKEKIYDLVL (160 aa)). Asn-229 is a binding site for K(+). GTP-binding positions include 229–234 (NTGKSS), 248–254 (TPVPGTT), 273–276 (DTAG), and 333–336 (NKAD). Ser-233 lines the Mg(2+) pocket. Residues Thr-248, Val-250, and Thr-253 each contribute to the K(+) site. Thr-254 contributes to the Mg(2+) binding site. Lys-457 is a binding site for (6S)-5-formyl-5,6,7,8-tetrahydrofolate.

It belongs to the TRAFAC class TrmE-Era-EngA-EngB-Septin-like GTPase superfamily. TrmE GTPase family. As to quaternary structure, homodimer. Heterotetramer of two MnmE and two MnmG subunits. K(+) is required as a cofactor.

It is found in the cytoplasm. Exhibits a very high intrinsic GTPase hydrolysis rate. Involved in the addition of a carboxymethylaminomethyl (cmnm) group at the wobble position (U34) of certain tRNAs, forming tRNA-cmnm(5)s(2)U34. This is tRNA modification GTPase MnmE from Syntrophus aciditrophicus (strain SB).